The primary structure comprises 2008 residues: Histone-lysine N-methyltransferase SETD1B (2008 aa).

The span at 1 to 20 shows a compositional bias: basic and acidic residues; it reads MSFREIKAGEKAKHPEDHGK. Residues 1–42 are disordered; it reads MSFREIKAGEKAKHPEDHGKKQSSSWINGMENSTQASTSVEK. Residues 22-39 show a composition bias toward polar residues; it reads QSSSWINGMENSTQASTS. Residues 111–199 enclose the RRM domain; it reads DEFYVGPVPP…NIIHVELDTK (89 aa). Disordered stretches follow at residues 249–390, 402–652, 682–725, 950–1172, 1309–1328, 1345–1461, 1563–1600, 1674–1712, and 1814–1842; these read NLSS…SSYK, FPQS…APIT, PPGF…PPLP, RKEP…DKRE, TKLPSAVEEEDRLPRTPGRE, VPSS…FTPT, VGASILPPPPPHSVLPKRRPGRPRRSPPSVLSLDMYSG, KEEEAHAKPKRQWRRQKKSPEHLPVIPSPEYSPPQPQFR, and EEPPADTQGMSIPAQPHASTRAGSERRSE. Over residues 251 to 264 the composition is skewed to low complexity; it reads SSVGSSVTPNSSTP. Composition is skewed to polar residues over residues 265–293, 301–315, 360–381, 405–414, and 456–491; these read FSHDTAYSSCRQDTPNSFSQFTPQSQGTP, PFSQDSTYSSRQTTP, HQFSTFKSHQQEPVQFSHTPPL, SEEQPFAQTS, and DSNSAPEPSAPSFSQTPERSETPGTPTMESEMQHNS. Residues 492-521 show a composition bias toward basic and acidic residues; the sequence is LDSRIEMLLKEQRTKLPFLNEHDSDNEVRM. Residues 524 to 537 are compositionally biased toward low complexity; that stretch reads SPISSSSSQLSPIP. Polar residues-rich tracts occupy residues 540–560 and 582–604; these read GSNSQPGYRAQTPSSRPSSTG and ASLNQNSRGTSEASMTPIDQLNR. Basic and acidic residues-rich tracts occupy residues 606 to 617 and 626 to 636; these read SKVETLEVKEMV and EKMDESQHSSG. Residues 637–646 show a composition bias toward acidic residues; the sequence is EDMEISDDEM. Residues 979 to 997 show a composition bias toward basic and acidic residues; it reads ERDRDASDTTSDLSKKDAE. The span at 1011 to 1020 shows a compositional bias: acidic residues; sequence LDSEGEEGDE. The span at 1021–1031 shows a compositional bias: basic and acidic residues; sequence TSGKEEESSSE. Composition is skewed to acidic residues over residues 1050–1094 and 1105–1149; these read EEEE…EEDA and ESSD…EDQD. The segment covering 1150–1172 has biased composition (basic and acidic residues); the sequence is REAMVAETEHEPASHELPDDKRE. The segment covering 1345–1356 has biased composition (low complexity); sequence VPSSTVPLPSTP. Residues 1378 to 1392 show a composition bias toward basic and acidic residues; the sequence is SIEEEIPRTPGRDIL. A compositionally biased stretch (low complexity) spans 1418 to 1427; the sequence is LTGSSLTLSS. Basic residues-rich tracts occupy residues 1577-1587 and 1681-1690; these read LPKRRPGRPRR and KPKRQWRRQK. Residues 1699–1710 are compositionally biased toward pro residues; the sequence is IPSPEYSPPQPQ. The RxxxRR motif signature appears at 1840-1845; that stretch reads RSEQRR. Residues 1869 to 1986 form the SET domain; the sequence is KKLKFCKSHI…VNEEITYDYK (118 aa). Y1985 lines the S-adenosyl-L-methionine pocket. The Post-SET domain occupies 1992 to 2008; it reads VKIPCLCGSENCRGTLN.

The protein belongs to the class V-like SAM-binding methyltransferase superfamily. In terms of assembly, component of the SET1B/COMPASS complex.

The protein localises to the nucleus speckle. It is found in the chromosome. The catalysed reaction is L-lysyl(4)-[histone H3] + 3 S-adenosyl-L-methionine = N(6),N(6),N(6)-trimethyl-L-lysyl(4)-[histone H3] + 3 S-adenosyl-L-homocysteine + 3 H(+). Histone methyltransferase that specifically methylates 'Lys-4' of histone H3, when part of the SET1 histone methyltransferase (HMT) complex, but not if the neighboring 'Lys-9' residue is already methylated. H3 'Lys-4' methylation represents a specific tag for epigenetic transcriptional activation. In Gallus gallus (Chicken), this protein is Histone-lysine N-methyltransferase SETD1B (SETD1B).